Here is a 112-residue protein sequence, read N- to C-terminus: Peptidyl-tRNA hydrolase (112 aa).

Belongs to the PTH2 family.

Its subcellular location is the cytoplasm. It catalyses the reaction an N-acyl-L-alpha-aminoacyl-tRNA + H2O = an N-acyl-L-amino acid + a tRNA + H(+). Functionally, the natural substrate for this enzyme may be peptidyl-tRNAs which drop off the ribosome during protein synthesis. In Methanothermobacter thermautotrophicus (strain ATCC 29096 / DSM 1053 / JCM 10044 / NBRC 100330 / Delta H) (Methanobacterium thermoautotrophicum), this protein is Peptidyl-tRNA hydrolase.